The primary structure comprises 468 residues: ATP synthase subunit beta (468 aa).

155–162 (GGAGVGKT) lines the ATP pocket.

The protein belongs to the ATPase alpha/beta chains family. As to quaternary structure, F-type ATPases have 2 components, CF(1) - the catalytic core - and CF(0) - the membrane proton channel. CF(1) has five subunits: alpha(3), beta(3), gamma(1), delta(1), epsilon(1). CF(0) has three main subunits: a(1), b(2) and c(9-12). The alpha and beta chains form an alternating ring which encloses part of the gamma chain. CF(1) is attached to CF(0) by a central stalk formed by the gamma and epsilon chains, while a peripheral stalk is formed by the delta and b chains.

The protein localises to the cell membrane. The enzyme catalyses ATP + H2O + 4 H(+)(in) = ADP + phosphate + 5 H(+)(out). Produces ATP from ADP in the presence of a proton gradient across the membrane. The catalytic sites are hosted primarily by the beta subunits. This chain is ATP synthase subunit beta, found in Streptococcus sanguinis (strain SK36).